Reading from the N-terminus, the 209-residue chain is Thiamine-phosphate synthase (209 aa).

Residues 40 to 44 (QLREK) and N72 each bind 4-amino-2-methyl-5-(diphosphooxymethyl)pyrimidine. D73 and D92 together coordinate Mg(2+). S111 contributes to the 4-amino-2-methyl-5-(diphosphooxymethyl)pyrimidine binding site. Residue 137–139 (TNS) coordinates 2-[(2R,5Z)-2-carboxy-4-methylthiazol-5(2H)-ylidene]ethyl phosphate. 4-amino-2-methyl-5-(diphosphooxymethyl)pyrimidine is bound at residue K140. 2-[(2R,5Z)-2-carboxy-4-methylthiazol-5(2H)-ylidene]ethyl phosphate is bound by residues G167 and 187–188 (IS).

It belongs to the thiamine-phosphate synthase family. Mg(2+) serves as cofactor.

The enzyme catalyses 2-[(2R,5Z)-2-carboxy-4-methylthiazol-5(2H)-ylidene]ethyl phosphate + 4-amino-2-methyl-5-(diphosphooxymethyl)pyrimidine + 2 H(+) = thiamine phosphate + CO2 + diphosphate. It carries out the reaction 2-(2-carboxy-4-methylthiazol-5-yl)ethyl phosphate + 4-amino-2-methyl-5-(diphosphooxymethyl)pyrimidine + 2 H(+) = thiamine phosphate + CO2 + diphosphate. It catalyses the reaction 4-methyl-5-(2-phosphooxyethyl)-thiazole + 4-amino-2-methyl-5-(diphosphooxymethyl)pyrimidine + H(+) = thiamine phosphate + diphosphate. Its pathway is cofactor biosynthesis; thiamine diphosphate biosynthesis; thiamine phosphate from 4-amino-2-methyl-5-diphosphomethylpyrimidine and 4-methyl-5-(2-phosphoethyl)-thiazole: step 1/1. Condenses 4-methyl-5-(beta-hydroxyethyl)thiazole monophosphate (THZ-P) and 2-methyl-4-amino-5-hydroxymethyl pyrimidine pyrophosphate (HMP-PP) to form thiamine monophosphate (TMP). This chain is Thiamine-phosphate synthase, found in Clostridium tetani (strain Massachusetts / E88).